The sequence spans 337 residues: Phenylalanine--tRNA ligase alpha subunit (337 aa).

Residue glutamate 252 participates in Mg(2+) binding.

This sequence belongs to the class-II aminoacyl-tRNA synthetase family. Phe-tRNA synthetase alpha subunit type 1 subfamily. In terms of assembly, tetramer of two alpha and two beta subunits. Mg(2+) is required as a cofactor.

It is found in the cytoplasm. It carries out the reaction tRNA(Phe) + L-phenylalanine + ATP = L-phenylalanyl-tRNA(Phe) + AMP + diphosphate + H(+). In Francisella tularensis subsp. holarctica (strain OSU18), this protein is Phenylalanine--tRNA ligase alpha subunit.